Consider the following 352-residue polypeptide: tRNA pseudouridine synthase D (352 aa).

Asp81 functions as the Nucleophile in the catalytic mechanism. The region spanning 157–303 (GVPNYFGGQR…MSHERRILRL (147 aa)) is the TRUD domain.

It belongs to the pseudouridine synthase TruD family.

It carries out the reaction uridine(13) in tRNA = pseudouridine(13) in tRNA. In terms of biological role, responsible for synthesis of pseudouridine from uracil-13 in transfer RNAs. The sequence is that of tRNA pseudouridine synthase D from Pseudomonas putida (strain W619).